The following is a 522-amino-acid chain: BTB/POZ domain-containing protein 16 (522 aa).

The BTB domain occupies 166-222; sequence INDPAVTRVAFALALKNLYMKEVEMTVDNVLGVLASAHILQFNRLFQKCVNMMMNRL.

The chain is BTB/POZ domain-containing protein 16 (Btbd16) from Mus musculus (Mouse).